Here is a 127-residue protein sequence, read N- to C-terminus: Apolipoprotein C-IV (127 aa).

An N-terminal signal peptide occupies residues 1 to 27 (MSLLRNRLQALPALCLCVLVLACIGAC). Residue N63 is glycosylated (N-linked (GlcNAc...) asparagine).

The protein belongs to the apolipoprotein C4 family. As to expression, expressed by the liver and secreted in plasma.

It is found in the secreted. In terms of biological role, may participate in lipoprotein metabolism. This chain is Apolipoprotein C-IV (APOC4), found in Homo sapiens (Human).